Consider the following 178-residue polypeptide: Interleukin-10 (178 aa).

A signal peptide spans 1–18 (MHSSALLCCLVLLTGVRA). Intrachain disulfides connect C30–C126 and C80–C132. The N-linked (GlcNAc...) asparagine glycan is linked to N134.

The protein belongs to the IL-10 family. Homodimer. Interacts with IL10RA and IL10RB.

Its subcellular location is the secreted. In terms of biological role, major immune regulatory cytokine that acts on many cells of the immune system where it has profound anti-inflammatory functions, limiting excessive tissue disruption caused by inflammation. Mechanistically, IL10 binds to its heterotetrameric receptor comprising IL10RA and IL10RB leading to JAK1 and STAT2-mediated phosphorylation of STAT3. In turn, STAT3 translocates to the nucleus where it drives expression of anti-inflammatory mediators. Targets antigen-presenting cells (APCs) such as macrophages and monocytes and inhibits their release of pro-inflammatory cytokines including granulocyte-macrophage colony-stimulating factor /GM-CSF, granulocyte colony-stimulating factor/G-CSF, IL-1 alpha, IL-1 beta, IL-6, IL-8 and TNF-alpha. Also interferes with antigen presentation by reducing the expression of MHC-class II and co-stimulatory molecules, thereby inhibiting their ability to induce T cell activation. In addition, controls the inflammatory response of macrophages by reprogramming essential metabolic pathways including mTOR signaling. In Pan troglodytes (Chimpanzee), this protein is Interleukin-10 (IL10).